The following is a 207-amino-acid chain: Frataxin, mitochondrial (207 aa).

A mitochondrion-targeting transit peptide spans 1-40; that stretch reads MWAFGGRAAVGLLPRTASRASAWVGNPRWREPIVTCGRRG.

The protein belongs to the frataxin family. As to quaternary structure, component of the mitochondrial core iron-sulfur cluster (ISC) complex composed of NFS1, LYRM4, NDUFAB1, ISCU, FXN, and FDX2; this complex is a heterohexamer containing two copies of each monomer. Homodimer. Monomer (probable predominant form). Oligomer. Monomers and polymeric aggregates of &gt;1 MDa have been isolated from mitochondria. A small fraction of heterologous overexpressed recombinant frataxin forms high-molecular weight aggregates that incorporate iron. Interacts with LYRM4. Interacts (via ferrous form) with ISCU; the interaction is possible when both are bound to the dimeric form of the cysteine desulfurase complex (NFS1:LYRM4) and the interaction enhances FXN interaction to the dimeric form of the cysteine desulfurase complex (NFS1:LYRM4). Interacts with FECH; one iron-bound FXN monomer seems to interact with a FECH homodimer. Interacts with SDHA and SDHB. Interacts with ACO2; the interaction is dependent on citrate. Interacts with HSPA9. Component of a complex composed of FXN, NFS1, LYRM4 and ISCU. Interacts with ACO1. Interacts with ISCU (cytoplasmic form). Processed in two steps by mitochondrial processing peptidase (MPP). MPP first cleaves the precursor to intermediate form and subsequently converts the intermediate to yield frataxin mature form (frataxin(81-210)) which is the predominant form. The additional forms, frataxin(56-210) and frataxin(78-210), seem to be produced when the normal maturation process is impaired; their physiological relevance is unsure. Heart, liver, skeletal muscle, kidney, spleen and thymus. Weakly expressed in the brain and lung.

It localises to the mitochondrion. Its subcellular location is the cytoplasm. The protein localises to the cytosol. It carries out the reaction 4 Fe(2+) + O2 + 4 H(+) = 4 Fe(3+) + 2 H2O. Functions as an activator of persulfide transfer to the scaffoding protein ISCU as component of the core iron-sulfur cluster (ISC) assembly complex and participates to the [2Fe-2S] cluster assembly. Accelerates sulfur transfer from NFS1 persulfide intermediate to ISCU and to small thiols such as L-cysteine and glutathione leading to persulfuration of these thiols and ultimately sulfide release. Binds ferrous ion and is released from FXN upon the addition of both L-cysteine and reduced FDX2 during [2Fe-2S] cluster assembly. The core iron-sulfur cluster (ISC) assembly complex is involved in the de novo synthesis of a [2Fe-2S] cluster, the first step of the mitochondrial iron-sulfur protein biogenesis. This process is initiated by the cysteine desulfurase complex (NFS1:LYRM4:NDUFAB1) that produces persulfide which is delivered on the scaffold protein ISCU in a FXN-dependent manner. Then this complex is stabilized by FDX2 which provides reducing equivalents to accomplish the [2Fe-2S] cluster assembly. Finally, the [2Fe-2S] cluster is transferred from ISCU to chaperone proteins, including HSCB, HSPA9 and GLRX5. May play a role in the protection against iron-catalyzed oxidative stress through its ability to catalyze the oxidation of Fe(2+) to Fe(3+); the oligomeric form but not the monomeric form has in vitro ferroxidase activity. May be able to store large amounts of iron in the form of a ferrihydrite mineral by oligomerization; however, the physiological relevance is unsure as reports are conflicting and the function has only been shown using heterologous overexpression systems. May function as an iron chaperone protein that protects the aconitase [4Fe-4S]2+ cluster from disassembly and promotes enzyme reactivation. May play a role as a high affinity iron binding partner for FECH that is capable of both delivering iron to ferrochelatase and mediating the terminal step in mitochondrial heme biosynthesis. Its function is as follows. Modulates the RNA-binding activity of ACO1. May be involved in the cytoplasmic iron-sulfur protein biogenesis. May contribute to oxidative stress resistance and overall cell survival. This is Frataxin, mitochondrial from Mus musculus (Mouse).